We begin with the raw amino-acid sequence, 139 residues long: Aspartate 1-decarboxylase (139 aa).

Catalysis depends on serine 25, which acts as the Schiff-base intermediate with substrate; via pyruvic acid. Serine 25 carries the post-translational modification Pyruvic acid (Ser). Threonine 57 contacts substrate. Residue tyrosine 58 is the Proton donor of the active site. Position 73–75 (73–75 (GAA)) interacts with substrate. A disordered region spans residues 116-139 (ELGSDPAHAPEGSGLTSPRSLTFA). The segment covering 129-139 (GLTSPRSLTFA) has biased composition (polar residues).

It belongs to the PanD family. Heterooctamer of four alpha and four beta subunits. It depends on pyruvate as a cofactor. Post-translationally, is synthesized initially as an inactive proenzyme, which is activated by self-cleavage at a specific serine bond to produce a beta-subunit with a hydroxyl group at its C-terminus and an alpha-subunit with a pyruvoyl group at its N-terminus.

It is found in the cytoplasm. It carries out the reaction L-aspartate + H(+) = beta-alanine + CO2. The protein operates within cofactor biosynthesis; (R)-pantothenate biosynthesis; beta-alanine from L-aspartate: step 1/1. Its function is as follows. Catalyzes the pyruvoyl-dependent decarboxylation of aspartate to produce beta-alanine. The protein is Aspartate 1-decarboxylase of Nocardia farcinica (strain IFM 10152).